The chain runs to 118 residues: Lutropin subunit beta (118 aa).

6 disulfide bridges follow: Cys-9–Cys-57, Cys-23–Cys-72, Cys-26–Cys-110, Cys-34–Cys-88, Cys-38–Cys-90, and Cys-93–Cys-100. Asn-13 carries an N-linked (GlcNAc...) asparagine glycan.

Belongs to the glycoprotein hormones subunit beta family. As to quaternary structure, heterodimer of a common alpha chain and a unique beta chain which confers biological specificity to thyrotropin, lutropin, follitropin and gonadotropin.

The protein resides in the secreted. Its function is as follows. Promotes spermatogenesis and ovulation by stimulating the testes and ovaries to synthesize steroids. In Balaenoptera acutorostrata (Common minke whale), this protein is Lutropin subunit beta (LHB).